A 341-amino-acid polypeptide reads, in one-letter code: GTP 3',8-cyclase (341 aa).

The region spanning 11 to 231 (KRERPLRDLR…DLINQHMPTE (221 aa)) is the Radical SAM core domain. Position 20 (arginine 20) interacts with GTP. Residues cysteine 27 and cysteine 31 each contribute to the [4Fe-4S] cluster site. Tyrosine 33 serves as a coordination point for S-adenosyl-L-methionine. Cysteine 34 contacts [4Fe-4S] cluster. Arginine 75 contacts GTP. Glycine 79 contributes to the S-adenosyl-L-methionine binding site. GTP is bound at residue threonine 106. Serine 130 contacts S-adenosyl-L-methionine. Lysine 167 serves as a coordination point for GTP. An S-adenosyl-L-methionine-binding site is contributed by methionine 201. [4Fe-4S] cluster is bound by residues cysteine 265 and cysteine 268. GTP is bound at residue 270 to 272 (RAR). A [4Fe-4S] cluster-binding site is contributed by cysteine 282.

It belongs to the radical SAM superfamily. MoaA family. In terms of assembly, monomer and homodimer. It depends on [4Fe-4S] cluster as a cofactor.

It carries out the reaction GTP + AH2 + S-adenosyl-L-methionine = (8S)-3',8-cyclo-7,8-dihydroguanosine 5'-triphosphate + 5'-deoxyadenosine + L-methionine + A + H(+). It participates in cofactor biosynthesis; molybdopterin biosynthesis. Its function is as follows. Catalyzes the cyclization of GTP to (8S)-3',8-cyclo-7,8-dihydroguanosine 5'-triphosphate. This is GTP 3',8-cyclase from Bacillus velezensis (strain DSM 23117 / BGSC 10A6 / LMG 26770 / FZB42) (Bacillus amyloliquefaciens subsp. plantarum).